The primary structure comprises 93 residues: Large ribosomal subunit protein uL23c (93 aa).

This sequence belongs to the universal ribosomal protein uL23 family. As to quaternary structure, part of the 50S ribosomal subunit.

Its subcellular location is the plastid. It localises to the chloroplast. Functionally, binds to 23S rRNA. The chain is Large ribosomal subunit protein uL23c (rpl23) from Fragaria ananassa (Strawberry).